Reading from the N-terminus, the 31-residue chain is Dermaseptin-7.1TR (31 aa).

Residue Q31 is modified to Glutamine amide.

In terms of tissue distribution, expressed by the skin glands.

Its subcellular location is the secreted. Functionally, has antimicrobial activity. The polypeptide is Dermaseptin-7.1TR (Phyllomedusa trinitatis (Trinidad leaf frog)).